The following is a 668-amino-acid chain: Metastasis-associated protein MTA2 (668 aa).

The BAH domain occupies 1–144; that stretch reads MAANMYRVGD…PVQKTLLADQ (144 aa). 2 positions are modified to phosphoserine: Ser52 and Ser54. The ELM2 domain maps to 145–256; that stretch reads GEIRVGCKFQ…KAMSTLVPQG (112 aa). N6-acetyllysine is present on Lys152. Residues 263 to 315 form the SANT domain; sequence DEMEEWSASEAMLFEEALEKYGKDFNDIRQDFLPWKSLASIVQFYYMWKTTDR. Residues 367-394 form a GATA-type; atypical zinc finger; that stretch reads CESCHTTQSAQWYAWGPPNMQCRLCASC. The tract at residues 412 to 437 is disordered; sequence GAARGTTEPHSRGHLSRPEAQSLSPY. Ser433 and Ser435 each carry phosphoserine. N6-acetyllysine is present on Lys460. Lys492 participates in a covalent cross-link: Glycyl lysine isopeptide (Lys-Gly) (interchain with G-Cter in SUMO2 and SUMO3); alternate. Residue Lys492 forms a Glycyl lysine isopeptide (Lys-Gly) (interchain with G-Cter in SUMO2); alternate linkage. A Glycyl lysine isopeptide (Lys-Gly) (interchain with G-Cter in SUMO2) cross-link involves residue Lys508. Lys522 and Lys531 each carry N6-acetyllysine. Thr534 is modified (phosphothreonine). Glycyl lysine isopeptide (Lys-Gly) (interchain with G-Cter in SUMO2) cross-links involve residues Lys559 and Lys595. 2 disordered regions span residues 580–599 and 647–668; these read ASGI…LNPA and PPVP…VLED.

The protein belongs to the metastasis-associated protein family. As to quaternary structure, component of the nucleosome remodeling and deacetylase (NuRD) repressor complex, composed of core proteins MTA1, MTA2, MTA3, RBBP4, RBBP7, HDAC1, HDAC2, MBD2, MBD3, and peripherally associated proteins CDK2AP1, CDK2AP2, GATAD2A, GATAD2B, CHD3, CHD4 and CHD5. The exact stoichiometry of the NuRD complex is unknown, and some subunits such as MBD2 and MBD3, GATAD2A and GATAD2B, and CHD3, CHD4 and CHD5 define mutually exclusive NuRD complexes. Interacts with CHD3. Interacts with CHD4. Interacts with GATAD2A. Interacts with HDAC7. Interacts with MBD3. Interacts with p53/TP53. Interacts with MINT. Interacts with PIMREG. Interacts with NACC2. Interacts with ERCC6. Interacts with PWWP2B. Interacts with transcription factor BCL11A.

The protein resides in the nucleus. May function as a transcriptional coregulator. Acts as a component of the histone deacetylase NuRD complex which participates in the remodeling of chromatin. This chain is Metastasis-associated protein MTA2 (Mta2), found in Mus musculus (Mouse).